The primary structure comprises 107 residues: Guanylate cyclase activator 2B (107 aa).

The first 21 residues, 1-21 (MSGSQLWAAVVVLLLLQSAQG), serve as a signal peptide directing secretion. The propeptide occupies 22–92 (VYIKYHGFQV…STFKALRTIA (71 aa)). 3 disulfide bridges follow: C63–C76, C96–C104, and C99–C107.

The protein belongs to the guanylin family.

Its subcellular location is the secreted. Functionally, endogenous activator of intestinal guanylate cyclase. It stimulates this enzyme through the same receptor binding region as the heat-stable enterotoxins. May be a potent physiological regulator of intestinal fluid and electrolyte transport. May be an autocrine/paracrine regulator of intestinal salt and water transport. The protein is Guanylate cyclase activator 2B (GUCA2B) of Notomys alexis (Spinifex hopping mouse).